The primary structure comprises 188 residues: GMP synthase [glutamine-hydrolyzing] subunit A (188 aa).

Residues 1-188 form the Glutamine amidotransferase type-1 domain; the sequence is MIVIMDNGGQ…RNFAKLCGEL (188 aa). The active-site Nucleophile is cysteine 78. Active-site residues include histidine 165 and glutamate 167.

Heterodimer composed of a glutamine amidotransferase subunit (A) and a GMP-binding subunit (B).

It carries out the reaction XMP + L-glutamine + ATP + H2O = GMP + L-glutamate + AMP + diphosphate + 2 H(+). It participates in purine metabolism; GMP biosynthesis; GMP from XMP (L-Gln route): step 1/1. In terms of biological role, catalyzes the synthesis of GMP from XMP. This Pyrococcus abyssi (strain GE5 / Orsay) protein is GMP synthase [glutamine-hydrolyzing] subunit A.